Here is a 240-residue protein sequence, read N- to C-terminus: 1-(5-phosphoribosyl)-5-[(5-phosphoribosylamino)methylideneamino] imidazole-4-carboxamide isomerase (240 aa).

The active-site Proton acceptor is the Asp8. Catalysis depends on Asp129, which acts as the Proton donor.

The protein belongs to the HisA/HisF family.

Its subcellular location is the cytoplasm. It carries out the reaction 1-(5-phospho-beta-D-ribosyl)-5-[(5-phospho-beta-D-ribosylamino)methylideneamino]imidazole-4-carboxamide = 5-[(5-phospho-1-deoxy-D-ribulos-1-ylimino)methylamino]-1-(5-phospho-beta-D-ribosyl)imidazole-4-carboxamide. The protein operates within amino-acid biosynthesis; L-histidine biosynthesis; L-histidine from 5-phospho-alpha-D-ribose 1-diphosphate: step 4/9. This is 1-(5-phosphoribosyl)-5-[(5-phosphoribosylamino)methylideneamino] imidazole-4-carboxamide isomerase from Caldanaerobacter subterraneus subsp. tengcongensis (strain DSM 15242 / JCM 11007 / NBRC 100824 / MB4) (Thermoanaerobacter tengcongensis).